A 570-amino-acid chain; its full sequence is Urease subunit alpha (570 aa).

The region spanning 131-570 (GGMDSHIHFI…LPMAQRYFLF (440 aa)) is the Urease domain. Ni(2+)-binding residues include H136, H138, and K219. Residue K219 is modified to N6-carboxylysine. H221 serves as a coordination point for substrate. Ni(2+) contacts are provided by H248 and H274. H322 acts as the Proton donor in catalysis. D362 provides a ligand contact to Ni(2+).

This sequence belongs to the metallo-dependent hydrolases superfamily. Urease alpha subunit family. As to quaternary structure, heterotrimer of UreA (gamma), UreB (beta) and UreC (alpha) subunits. Three heterotrimers associate to form the active enzyme. Requires Ni cation as cofactor. Carboxylation allows a single lysine to coordinate two nickel ions.

It is found in the cytoplasm. The enzyme catalyses urea + 2 H2O + H(+) = hydrogencarbonate + 2 NH4(+). Its pathway is nitrogen metabolism; urea degradation; CO(2) and NH(3) from urea (urease route): step 1/1. The protein is Urease subunit alpha of Rhizobium leguminosarum bv. trifolii (strain WSM2304).